The following is a 276-amino-acid chain: 1-(5-phosphoribosyl)-5-[(5-phosphoribosylamino)methylideneamino] imidazole-4-carboxamide isomerase (276 aa).

It belongs to the HisA/HisF family.

The protein resides in the cytoplasm. The catalysed reaction is 1-(5-phospho-beta-D-ribosyl)-5-[(5-phospho-beta-D-ribosylamino)methylideneamino]imidazole-4-carboxamide = 5-[(5-phospho-1-deoxy-D-ribulos-1-ylimino)methylamino]-1-(5-phospho-beta-D-ribosyl)imidazole-4-carboxamide. It participates in amino-acid biosynthesis; L-histidine biosynthesis; L-histidine from 5-phospho-alpha-D-ribose 1-diphosphate: step 4/9. This Debaryomyces hansenii (strain ATCC 36239 / CBS 767 / BCRC 21394 / JCM 1990 / NBRC 0083 / IGC 2968) (Yeast) protein is 1-(5-phosphoribosyl)-5-[(5-phosphoribosylamino)methylideneamino] imidazole-4-carboxamide isomerase (HIS6).